A 490-amino-acid polypeptide reads, in one-letter code: Bifunctional protein HldE (490 aa).

The tract at residues 1-330 is ribokinase; sequence MNNFDTLLQS…RKILPHASLA (330 aa). ATP is bound at residue 205–208; it reads NRKE. The active site involves Asp275. Positions 358–490 are cytidylyltransferase; the sequence is FTNGCFDILH…LVEKAREGTS (133 aa).

In the N-terminal section; belongs to the carbohydrate kinase PfkB family. It in the C-terminal section; belongs to the cytidylyltransferase family. As to quaternary structure, homodimer.

The catalysed reaction is D-glycero-beta-D-manno-heptose 7-phosphate + ATP = D-glycero-beta-D-manno-heptose 1,7-bisphosphate + ADP + H(+). It catalyses the reaction D-glycero-beta-D-manno-heptose 1-phosphate + ATP + H(+) = ADP-D-glycero-beta-D-manno-heptose + diphosphate. It participates in nucleotide-sugar biosynthesis; ADP-L-glycero-beta-D-manno-heptose biosynthesis; ADP-L-glycero-beta-D-manno-heptose from D-glycero-beta-D-manno-heptose 7-phosphate: step 1/4. The protein operates within nucleotide-sugar biosynthesis; ADP-L-glycero-beta-D-manno-heptose biosynthesis; ADP-L-glycero-beta-D-manno-heptose from D-glycero-beta-D-manno-heptose 7-phosphate: step 3/4. In terms of biological role, catalyzes the phosphorylation of D-glycero-D-manno-heptose 7-phosphate at the C-1 position to selectively form D-glycero-beta-D-manno-heptose-1,7-bisphosphate. Catalyzes the ADP transfer from ATP to D-glycero-beta-D-manno-heptose 1-phosphate, yielding ADP-D-glycero-beta-D-manno-heptose. The polypeptide is Bifunctional protein HldE (Rhodopseudomonas palustris (strain HaA2)).